A 490-amino-acid polypeptide reads, in one-letter code: WD repeat-containing protein JIP5 (490 aa).

7 WD repeats span residues 23–64 (KYND…ERMQ), 70–112 (QKKK…GSCR), 118–155 (PIESSVGKHLFTVGKDHVVKKANTETGKVLTKTDISKD), 157–196 (SSKDAVTKLCHSTTHPFLLSGTENGHVLVYDSNDLSNKFK), 242–284 (DQED…LMDQ), 286–327 (SRIK…HRVN), and 340–377 (GTADEVGFLDIDYEYRLLTAGMDSMKLWSAEGDDEEEE). The interval 368–490 (SAEGDDEEEE…SHGIRRFDGL (123 aa)) is disordered. Acidic residues-rich tracts occupy residues 370 to 406 (EGDDEEEEESEGEESEESEESDEESDESSGEESEGDD) and 413 to 437 (EESDSNDEDEVESSDDEKEKEEEST). A compositionally biased stretch (basic and acidic residues) spans 438–448 (ETDHKNIEAES). The span at 450-461 (KQANKRQASQPK) shows a compositional bias: polar residues. Basic residues predominate over residues 469–484 (KQKLKQTSKLAHSHGI).

Belongs to the WD repeat WDR55 family.

Its subcellular location is the nucleus. The protein resides in the nucleolus. In Meyerozyma guilliermondii (strain ATCC 6260 / CBS 566 / DSM 6381 / JCM 1539 / NBRC 10279 / NRRL Y-324) (Yeast), this protein is WD repeat-containing protein JIP5 (JIP5).